The following is a 306-amino-acid chain: Dihydroorotate dehydrogenase B (NAD(+)), catalytic subunit (306 aa).

FMN contacts are provided by residues serine 24 and 48–49 (KA). Residues lysine 48 and 72–76 (NAIGL) contribute to the substrate site. Positions 102 and 130 each coordinate FMN. Position 130 (asparagine 130) interacts with substrate. Catalysis depends on cysteine 133, which acts as the Nucleophile. FMN contacts are provided by lysine 168 and isoleucine 194. Residue 195–196 (NT) participates in substrate binding. FMN contacts are provided by residues glycine 220, 246–247 (GG), and 268–269 (GT).

The protein belongs to the dihydroorotate dehydrogenase family. Type 1 subfamily. In terms of assembly, heterotetramer of 2 PyrK and 2 PyrD type B subunits. FMN serves as cofactor.

The protein localises to the cytoplasm. The catalysed reaction is (S)-dihydroorotate + NAD(+) = orotate + NADH + H(+). The protein operates within pyrimidine metabolism; UMP biosynthesis via de novo pathway; orotate from (S)-dihydroorotate (NAD(+) route): step 1/1. Functionally, catalyzes the conversion of dihydroorotate to orotate with NAD(+) as electron acceptor. This Malacoplasma penetrans (strain HF-2) (Mycoplasma penetrans) protein is Dihydroorotate dehydrogenase B (NAD(+)), catalytic subunit (pyrD).